Here is a 265-residue protein sequence, read N- to C-terminus: Inositol monophosphatase 2 (265 aa).

Residues glutamate 65, aspartate 86, leucine 88, and aspartate 89 each coordinate Mg(2+). Glutamate 65 serves as a coordination point for substrate. Substrate-binding positions include 88–91 (LDGT), 189–191 (GSC), glutamate 208, and aspartate 216. Aspartate 216 lines the Mg(2+) pocket.

It belongs to the inositol monophosphatase superfamily. Requires Mg(2+) as cofactor. In terms of tissue distribution, low expression in roots, stems, leaves, flowers and young and mature green fruits. Expressed in the stem/leaf junctions, below the shoot apex and on the abaxial side of the petiole of the first expanded leaflets.

The catalysed reaction is a myo-inositol phosphate + H2O = myo-inositol + phosphate. It functions in the pathway polyol metabolism; myo-inositol biosynthesis; myo-inositol from D-glucose 6-phosphate: step 2/2. Responsible for the provision of inositol required for synthesis of phosphatidylinositol and polyphosphoinositides. This is Inositol monophosphatase 2 (IMP2) from Solanum lycopersicum (Tomato).